Consider the following 118-residue polypeptide: DNA-binding protein Msp_0595 (118 aa).

Residues 15–44 show a composition bias toward low complexity; the sequence is LKQQQLAAQQQQGASLEQMQQEEQARQQFE. A disordered region spans residues 15 to 45; that stretch reads LKQQQLAAQQQQGASLEQMQQEEQARQQFEN.

Belongs to the PDCD5 family.

This Methanosphaera stadtmanae (strain ATCC 43021 / DSM 3091 / JCM 11832 / MCB-3) protein is DNA-binding protein Msp_0595.